The following is a 54-amino-acid chain: Large ribosomal subunit protein bL33 (54 aa).

The protein belongs to the bacterial ribosomal protein bL33 family.

The sequence is that of Large ribosomal subunit protein bL33 from Stenotrophomonas maltophilia (strain R551-3).